The chain runs to 525 residues: Probable malate:quinone oxidoreductase (525 aa).

This sequence belongs to the MQO family. Requires FAD as cofactor.

It carries out the reaction (S)-malate + a quinone = a quinol + oxaloacetate. It participates in carbohydrate metabolism; tricarboxylic acid cycle; oxaloacetate from (S)-malate (quinone route): step 1/1. The protein is Probable malate:quinone oxidoreductase of Serratia proteamaculans (strain 568).